A 1283-amino-acid polypeptide reads, in one-letter code: MATSAVQSAACPPNTFTCADGSCIPSDWKGDGEKDCEDGSDEEAVTGETTTKFDEVVSAPTTPGSDEDCDWGMQQRIDNCSEPIVHFLSQIERLNLKNMSFLTSSEIQSRFEAGCNLMTTYQECVGNQKGCMPDEGVHSWGEVEVFMCQLVLPSVKEHAGCFKSSADPRCDASKTSSSSTLCGLVTSIQTATSCLETIRPETCSSDAIEMLSPIREETEHIVSAIRCVTPEQHASSTTLIVDETTESTSASAEDDDDDVLTTNTSEESTATTAHDEEVENKPALNINMADAVNSLYYIYDICSANYSADPFAAIADKICAKQDEIAKWSNCYQKTLEKEKCAIRNATSKCEALISYNNNLDCAIVTMNDECEVDAQNLVVELQEEVNDLIIAGKCFEDKKEEEKEPVNDGDFHLQSTLPKCTEEQENGALGCLVELVEINKKLTAFANLNFLLEIASPNSTVVEGICSLFARYEQCLSATVFKNSQRCSFASPLNSLARIGLAPICSLDSRPLLSKHRDCFEKLATEADEDTNCQSSLSTLSNTVQMMLQGVHGEALLCKSFYTIRDTFTCGERAVKNKCEADALTDLLSLKTKMTSLGEEEGCPRDPPANLDEIISRPVARPTPVTMPPRAPTAKPLPIPSAPTPPVASSKCSIEDQKKFEECVKPLTSFQPHPLSVIAIPRDIDQACEAFHTFKACSAESNCHPLWARGMSAMFEYACNEANEQFKKVRKCIRETSMIEEVRSCVSDFSRGAPTAACMSSNRLHSCAIPQIQGKCGQDAADWVSNYIIRFANAIDVRCKVGRQLPVGRVVGIGCSAEEESIIEHCAAPLNDIGSRVEELFAGGMQSLIKNINSLAPVFAGACNLTDEFKTCAHFLLEGRTSCVVSSCMVEAGRGICQLSDPAKAIDDNLSCLFGQAQEPKFAQCIRSTISTLKQFNLSTLRAVLPKFIDCTRDIVVAKCGESPIKIMKAMSTPDICPIRPHQAPIVPINQPARVTPTLETVLSSSTMVSTSSESDSESAPEQETEPTVPSTTETTESPSTPTDGCGESGLVEYLQCETHLDQFAFRPISIIGDASKWDQFCQMANQTYIPCVEGLKCKYEPAASAQIGLIDSICNRKITLKDQKQHGMCLSEYTKSDAGVACISDFGKIDQLDSSSPAQMCDGINQVMRCSTSEIEKRCGFDAVLHVFSIHMHWANLFNASCILESPEPTKDSTSIDVNEVEPSRDQKPVVVTKDETTPVSITTAMNNDITESETTQSPPVQSSVSFHIILAALIPFFALF.

Residues 10-46 (ACPPNTFTCADGSCIPSDWKGDGEKDCEDGSDEEAVT) enclose the LDL-receptor class A domain. Cystine bridges form between cysteine 11–cysteine 23 and cysteine 18–cysteine 36. Positions 27-47 (DWKGDGEKDCEDGSDEEAVTG) are disordered. A compositionally biased stretch (acidic residues) spans 34–45 (KDCEDGSDEEAV). The N-linked (GlcNAc...) asparagine glycan is linked to asparagine 79. A disordered region spans residues 236–278 (STTLIVDETTESTSASAEDDDDDVLTTNTSEESTATTAHDEEV). The segment covering 261–272 (TTNTSEESTATT) has biased composition (low complexity). Positions 332–389 (YQKTLEKEKCAIRNATSKCEALISYNNNLDCAIVTMNDECEVDAQNLVVELQEEVNDL) form a coiled coil. Disordered stretches follow at residues 621–651 (ARPT…VASS) and 1005–1046 (SSST…PTDG). Positions 626-647 (VTMPPRAPTAKPLPIPSAPTPP) are enriched in pro residues. A compositionally biased stretch (low complexity) spans 1005-1015 (SSSTMVSTSSE). Acidic residues predominate over residues 1016-1026 (SDSESAPEQET). Low complexity predominate over residues 1027–1044 (EPTVPSTTETTESPSTPT). A helical membrane pass occupies residues 1263-1283 (VQSSVSFHIILAALIPFFALF).

It is found in the membrane. This is an uncharacterized protein from Caenorhabditis elegans.